The chain runs to 490 residues: Bifunctional protein HldE (490 aa).

Residues 1 to 330 form a ribokinase region; the sequence is MDRTNIENFL…EAMAHHALEY (330 aa). 205-208 is an ATP binding site; that stretch reads NRKE. Asp275 is an active-site residue. The cytidylyltransferase stretch occupies residues 356-490; that stretch reads FTNGCFDLLH…ERILDRYEQG (135 aa).

This sequence in the N-terminal section; belongs to the carbohydrate kinase PfkB family. In the C-terminal section; belongs to the cytidylyltransferase family. As to quaternary structure, homodimer.

The catalysed reaction is D-glycero-beta-D-manno-heptose 7-phosphate + ATP = D-glycero-beta-D-manno-heptose 1,7-bisphosphate + ADP + H(+). The enzyme catalyses D-glycero-beta-D-manno-heptose 1-phosphate + ATP + H(+) = ADP-D-glycero-beta-D-manno-heptose + diphosphate. The protein operates within nucleotide-sugar biosynthesis; ADP-L-glycero-beta-D-manno-heptose biosynthesis; ADP-L-glycero-beta-D-manno-heptose from D-glycero-beta-D-manno-heptose 7-phosphate: step 1/4. It participates in nucleotide-sugar biosynthesis; ADP-L-glycero-beta-D-manno-heptose biosynthesis; ADP-L-glycero-beta-D-manno-heptose from D-glycero-beta-D-manno-heptose 7-phosphate: step 3/4. Functionally, catalyzes the phosphorylation of D-glycero-D-manno-heptose 7-phosphate at the C-1 position to selectively form D-glycero-beta-D-manno-heptose-1,7-bisphosphate. In terms of biological role, catalyzes the ADP transfer from ATP to D-glycero-beta-D-manno-heptose 1-phosphate, yielding ADP-D-glycero-beta-D-manno-heptose. This chain is Bifunctional protein HldE, found in Syntrophotalea carbinolica (strain DSM 2380 / NBRC 103641 / GraBd1) (Pelobacter carbinolicus).